Reading from the N-terminus, the 71-residue chain is Large ribosomal subunit protein bL31 (71 aa).

The protein belongs to the bacterial ribosomal protein bL31 family. Type A subfamily. As to quaternary structure, part of the 50S ribosomal subunit.

In terms of biological role, binds the 23S rRNA. The chain is Large ribosomal subunit protein bL31 from Metamycoplasma arthritidis (strain 158L3-1) (Mycoplasma arthritidis).